The primary structure comprises 730 residues: Translation initiation factor IF-2 (730 aa).

Residues 48–151 are disordered; that stretch reads GNGNQKQGGS…NKAKPLPEKV (104 aa). 2 stretches are compositionally biased toward basic and acidic residues: residues 61–77 and 89–104; these read EQQKKAGEKKPAQDHGQ and NQHDRSQGSDQQKGKA. The span at 110 to 123 shows a compositional bias: basic residues; it reads KPKHKGNKNKKQHQ. Basic and acidic residues predominate over residues 137 to 148; that stretch reads RQPEMNKAKPLP. The tr-type G domain occupies 231-400; the sequence is ERPPVVTIMG…LLVAEVEELK (170 aa). Residues 240–247 are G1; it reads GHVDHGKT. Residue 240-247 coordinates GTP; the sequence is GHVDHGKT. The G2 stretch occupies residues 265 to 269; that stretch reads GITQH. The tract at residues 286-289 is G3; the sequence is DTPG. Residues 286 to 290 and 340 to 343 each bind GTP; these read DTPGH and NKMD. Positions 340–343 are G4; sequence NKMD. Residues 376–378 are G5; sequence SAL.

The protein belongs to the TRAFAC class translation factor GTPase superfamily. Classic translation factor GTPase family. IF-2 subfamily.

It is found in the cytoplasm. One of the essential components for the initiation of protein synthesis. Protects formylmethionyl-tRNA from spontaneous hydrolysis and promotes its binding to the 30S ribosomal subunits. Also involved in the hydrolysis of GTP during the formation of the 70S ribosomal complex. The protein is Translation initiation factor IF-2 of Halalkalibacterium halodurans (strain ATCC BAA-125 / DSM 18197 / FERM 7344 / JCM 9153 / C-125) (Bacillus halodurans).